Here is a 279-residue protein sequence, read N- to C-terminus: Diaminopimelate epimerase (279 aa).

Residues asparagine 12, glutamine 45, and asparagine 65 each contribute to the substrate site. Cysteine 74 functions as the Proton donor in the catalytic mechanism. Substrate is bound by residues 75–76, asparagine 162, asparagine 195, and 213–214; these read GN and ER. Cysteine 222 functions as the Proton acceptor in the catalytic mechanism. Residue 223–224 participates in substrate binding; it reads GS.

Belongs to the diaminopimelate epimerase family. Homodimer.

It localises to the cytoplasm. The enzyme catalyses (2S,6S)-2,6-diaminopimelate = meso-2,6-diaminopimelate. It participates in amino-acid biosynthesis; L-lysine biosynthesis via DAP pathway; DL-2,6-diaminopimelate from LL-2,6-diaminopimelate: step 1/1. In terms of biological role, catalyzes the stereoinversion of LL-2,6-diaminopimelate (L,L-DAP) to meso-diaminopimelate (meso-DAP), a precursor of L-lysine and an essential component of the bacterial peptidoglycan. This is Diaminopimelate epimerase from Shewanella loihica (strain ATCC BAA-1088 / PV-4).